Here is a 275-residue protein sequence, read N- to C-terminus: Ribosome-recycling factor, chloroplastic (275 aa).

The transit peptide at 1–82 (MAASFSSTAP…SLQKRLVIRS (82 aa)) directs the protein to the chloroplast. Positions 215-271 (KVALRNIRRDALKSYDKLEKEKKLSEDNVKDLSSDLQKLIDVYMKKIEELYKQKEKE) form a coiled coil.

Belongs to the RRF family.

It is found in the plastid. Its subcellular location is the chloroplast. Functionally, responsible for the release of ribosomes from messenger RNA at the termination of chloroplastic protein biosynthesis. This is Ribosome-recycling factor, chloroplastic (RRF) from Arabidopsis thaliana (Mouse-ear cress).